Consider the following 874-residue polypeptide: Alanine--tRNA ligase (874 aa).

Residues histidine 562, histidine 566, cysteine 665, and histidine 669 each coordinate Zn(2+).

It belongs to the class-II aminoacyl-tRNA synthetase family. It depends on Zn(2+) as a cofactor.

It localises to the cytoplasm. The enzyme catalyses tRNA(Ala) + L-alanine + ATP = L-alanyl-tRNA(Ala) + AMP + diphosphate. Catalyzes the attachment of alanine to tRNA(Ala) in a two-step reaction: alanine is first activated by ATP to form Ala-AMP and then transferred to the acceptor end of tRNA(Ala). Also edits incorrectly charged Ser-tRNA(Ala) and Gly-tRNA(Ala) via its editing domain. The chain is Alanine--tRNA ligase from Pseudomonas putida (strain ATCC 700007 / DSM 6899 / JCM 31910 / BCRC 17059 / LMG 24140 / F1).